A 449-amino-acid polypeptide reads, in one-letter code: Protein translocase subunit SecD (449 aa).

Helical transmembrane passes span 6–26, 272–292, 294–314, 317–337, 379–399, and 401–421; these read GLVFLAILAAMILAFTIVLPT, LAVKAGLVGIILVMIFMIAFY, LPGLLASIALVFYGVIVLALF, VPVTLTLAGIGGFIVSAGMAV, TFIACGILFWVGGTIAAGAPV, and GFAVTLFLGVAVSMFTAIFVT.

This sequence belongs to the SecD/SecF family. SecD subfamily. In terms of assembly, forms a complex with SecF. Part of the essential Sec protein translocation apparatus which comprises SecA, SecYEG and auxiliary proteins SecDF. Other proteins may also be involved.

The protein localises to the cell membrane. Functionally, part of the Sec protein translocase complex. Interacts with the SecYEG preprotein conducting channel. SecDF uses the proton motive force (PMF) to complete protein translocation after the ATP-dependent function of SecA. In Dehalococcoides mccartyi (strain VS), this protein is Protein translocase subunit SecD.